The primary structure comprises 607 residues: MPLLEPSATAYGTFGDMRPDTEDEGERLLTDGYVSDDDGSAVTSVDSVQEGVRKIEAINITWTTRSLVIAYISIFLMAFCTSLEGQTIMSLSAYATSAFSKHSLISTVLVVQNVVNAVIKPPMAKIADVFGRFEAFCVSILIYVLGYIQMAASTNVQTYASAQIFYAAGSTGLQILQQVFIADSSSLLNRALLALLPELPFLVTVWIGPTIADVVLENSSWRWGYGMWSIILPASFLPLALSLLLNQRKAKRLNLIKERPHHRRGFVAAVRRTWYDLDIFGLALLSAAVTLILVPLTLAANTKNGWKSNSIVAMIVIGVVCLILLPFWETSKKLAPKPLLSLHLLKQRTALAGCCLAFFYFMAFYFSVQPYLYSYLQVVQGYDVATAGRVTQTFAFTSTIAAFGVSILIKYTRRYRVYVTLGCVIYMTGLLLMLLYRKEGSSPLQVLGTQVIVGMGGGLLNVPVQLGVQASASHQEVAAATAMFLTSMEMGGAVGAAISGAVWTHNIPRKLNLYLPDEYKSEAGAIFGKLTKALSYEMGTPVRSAINRSYQETMNKLLVLALLATLPLIPLSLLMSNYKLDKMSESSDHDDASPRNGLGPGERAKRT.

12 helical membrane passes run 67–89 (LVIA…QTIM), 129–148 (VFGR…LGYI), 186–208 (SLLN…VWIG), 223–245 (WGYG…SLLL), 279–301 (IFGL…LAAN), 311–328 (IVAM…LPFW), 349–368 (TALA…YFSV), 388–410 (GRVT…ILIK), 417–436 (VYVT…MLLY), 446–468 (VLGT…QLGV), 481–503 (TAMF…GAVW), and 557–574 (LLVL…LSLL). Residues 584–593 (SESSDHDDAS) are compositionally biased toward basic and acidic residues. Residues 584–607 (SESSDHDDASPRNGLGPGERAKRT) are disordered.

This sequence belongs to the major facilitator superfamily.

Its subcellular location is the membrane. The sequence is that of Siderophore iron transporter mirC (mirC) from Emericella nidulans (strain FGSC A4 / ATCC 38163 / CBS 112.46 / NRRL 194 / M139) (Aspergillus nidulans).